The sequence spans 679 residues: Single-strand DNA endonuclease ASTE1 (679 aa).

Positions 351–400 (TILPTQVENMQQPNAHRISQPIRQIIYGLLLNASPHLDKTSWNALPPQPL) are interaction with SHLD2. The tract at residues 625-645 (RSNSKKKRQKKQNTSCSKNRG) is disordered. Over residues 626–635 (SNSKKKRQKK) the composition is skewed to basic residues.

The protein belongs to the asteroid family. In terms of assembly, interacts with SHLD1, SHLD2, SHLD3, RIF1 and MAD2L2/REV7.

Its function is as follows. Structure-specific DNA endonuclease that specifically cleaves single-stranded DNA and 3' overhang DNA. Contributes to the control of DNA double-strand break repair choice by antagonizing BRCA1-dependent homologous recombination (HR) and promoting non-homologous end-joining (NHEJ). Recruited to the single-stranded DNA ends by SHLD2 and cleaves the 3' exposed DNA ends, therefore inhibiting DNA end resection (necessary for HR) and promoting DNA end protection (necessary for NHEJ). The sequence is that of Single-strand DNA endonuclease ASTE1 (ASTE1) from Pongo abelii (Sumatran orangutan).